A 536-amino-acid polypeptide reads, in one-letter code: ATPase expression protein 3 (536 aa).

2 PPR repeats span residues Thr-212–Pro-246 and Thr-386–Pro-421.

It localises to the mitochondrion inner membrane. In terms of biological role, required for respiration. This chain is ATPase expression protein 3 (AEP3), found in Eremothecium gossypii (strain ATCC 10895 / CBS 109.51 / FGSC 9923 / NRRL Y-1056) (Yeast).